Reading from the N-terminus, the 282-residue chain is tRNA N(3)-cytidine methyltransferase METTL6 (282 aa).

The S-adenosyl-L-methionine site is built by tryptophan 45, tyrosine 49, glycine 87, aspartate 110, aspartate 136, leucine 137, and isoleucine 157.

The protein belongs to the methyltransferase superfamily. METL family. As to quaternary structure, monomer. Interacts with SARS1/SerRS; interaction is mediated via tRNA(Ser) and is required for N(3)-methylcytidine methylation.

Its subcellular location is the cytoplasm. It is found in the nucleus. It carries out the reaction cytidine(32) in tRNA(Ser) + S-adenosyl-L-methionine = N(3)-methylcytidine(32) in tRNA(Ser) + S-adenosyl-L-homocysteine + H(+). Functionally, S-adenosyl-L-methionine-dependent methyltransferase that mediates N(3)-methylcytidine modification of residue 32 of the tRNA anticodon loop of tRNA(Ser), including tRNA(Ser)(UGA) and tRNA(Ser)(GCU). Interaction with SARS1/SerRS is required for N(3)-methylcytidine methylation. This chain is tRNA N(3)-cytidine methyltransferase METTL6 (METTL6), found in Pongo abelii (Sumatran orangutan).